Consider the following 175-residue polypeptide: Nucleoside triphosphate/diphosphate phosphatase (175 aa).

The active-site Proton donor is the arginine 23. The Mg(2+) site is built by asparagine 87, aspartate 103, aspartate 105, aspartate 107, aspartate 120, and glutamate 123.

The protein belongs to the Ntdp family. The cofactor is Mg(2+).

The enzyme catalyses a ribonucleoside 5'-triphosphate + H2O = a ribonucleoside 5'-diphosphate + phosphate + H(+). It carries out the reaction a ribonucleoside 5'-diphosphate + H2O = a ribonucleoside 5'-phosphate + phosphate + H(+). Functionally, has nucleoside phosphatase activity towards nucleoside triphosphates and nucleoside diphosphates. This chain is Nucleoside triphosphate/diphosphate phosphatase, found in Listeria innocua serovar 6a (strain ATCC BAA-680 / CLIP 11262).